Consider the following 574-residue polypeptide: Bifunctional NADP phosphatase/NAD kinase (574 aa).

Residues 1 to 297 form an NADP phosphatase region; it reads MVIMEGFKIA…KLIALFGNRW (297 aa). Mg(2+)-binding residues include Glu69, Asp87, Ile89, Asp90, and Asp243. The segment at 302-574 is NAD kinase; the sequence is VKFGIVVRED…NKLSRCLGIK (273 aa). The active-site Proton acceptor is the Asp362. Residues 362–363, Arg367, 436–437, Lys447, Arg464, Asp466, and 477–482 contribute to the NAD(+) site; these read DG, NE, and TAYSLS.

The protein in the N-terminal section; belongs to the inositol monophosphatase superfamily. This sequence in the C-terminal section; belongs to the NAD kinase family. Homotetramer. The cofactor is Mg(2+).

The protein localises to the cytoplasm. It carries out the reaction NAD(+) + ATP = ADP + NADP(+) + H(+). The catalysed reaction is NADP(+) + H2O = phosphate + NAD(+). The enzyme catalyses UTP + NAD(+) = UDP + NADP(+) + H(+). It catalyses the reaction 5-methyl-UTP + NAD(+) = 5-methyl-UDP + NADP(+) + H(+). It carries out the reaction CTP + NAD(+) = CDP + NADP(+) + H(+). The catalysed reaction is GTP + NAD(+) = GDP + NADP(+) + H(+). The enzyme catalyses dATP + NAD(+) = dADP + NADP(+) + H(+). It catalyses the reaction NADPH + H2O = phosphate + NADH. It carries out the reaction adenosine 2'-phosphate + H2O = adenosine + phosphate. The catalysed reaction is beta-D-fructose 1,6-bisphosphate + H2O = beta-D-fructose 6-phosphate + phosphate. Phosphatase activity is slightly inhibited by ADP, NADH and ATP, and moderately inhibited by NAD and 5'-AMP. Kinase activity is slightly inhibited by ADP and NADP. Functionally, involved in the regulation of the intracellular balance between NAD(H) and NADP(H), and is a key enzyme in the biosynthesis of NADP. Catalyzes the phosphorylation and dephosphorylation of NAD and NADP, respectively. Although it shows conflicting dual activities and is able to supply NADP, it seems that its physiological role is to prevent excess accumulation of NADP. Kinase can use ATP and other nucleoside triphosphates (UTP, TTP, CTP, GTP) as well as inorganic polyphosphate (poly(P)) as phosphoryl donors, however poly(P) is not considered to be the physiological phosphoryl donor. NAD is the preferred substrate for the kinase, but NADH can also be used as phosphoryl acceptor. Phosphatase can use NADP or NADPH as phosphoryl donor, but NADP is the preferred substrate. Phosphatase also has an activity toward the terminal phosphate group at C-2 of adenosine in 2'-AMP and toward the phosphate group at C-1 of fructose 1,6-bisphosphate, but not toward inositol 1-phosphate. In Methanocaldococcus jannaschii (strain ATCC 43067 / DSM 2661 / JAL-1 / JCM 10045 / NBRC 100440) (Methanococcus jannaschii), this protein is Bifunctional NADP phosphatase/NAD kinase.